We begin with the raw amino-acid sequence, 121 residues long: uncharacterized protein (121 aa).

This is an uncharacterized protein from Microplitis demolitor (Parasitoid wasp).